The sequence spans 420 residues: MNILDDLKARGLVYQTTDEEALYKRLESPMTLYCGFDPTADSLHIGHLLPVLMLRRFQLAGHCPIALVGGGTGLIGDPSGKTSERTLNPTEVVQEWANRIKEQLSCFLDFEGVGNPAIMANNYEWLGTINVIEFLRDIGKNFSLGSMLAKESVESRMSRGISFTEFSYQILQSYDFLKLNELYGCEMQIGGSDQWGNITSGTDLIRRMSVGEDRQVHGLTVPLVTKSDGTKFGKTEGGAVWLDQDKTSPYKFYQFWINTDDRDVVKYLNFFTFLSIEEIQGLAQEVESQPEKRNAQRMLAKEVTELVHGVEARERAEKISQALFTGGIANLTAKEVEEGFSDVPSADVEDQEMLLVDALIKVGAVSSRRQARESMESGAVYVNGIRQTDTTLTVAQLDKIESRFIVIRRGKKNYYLVKLV.

An L-tyrosine-binding site is contributed by Tyr-33. Residues 38–47 (PTADSLHIGH) carry the 'HIGH' region motif. L-tyrosine-binding residues include Tyr-168 and Gln-172. Positions 231 to 235 (KFGKT) match the 'KMSKS' region motif. Lys-234 is a binding site for ATP. Positions 353-419 (MLLVDALIKV…GKKNYYLVKL (67 aa)) constitute an S4 RNA-binding domain.

The protein belongs to the class-I aminoacyl-tRNA synthetase family. TyrS type 1 subfamily. As to quaternary structure, homodimer.

The protein resides in the cytoplasm. The enzyme catalyses tRNA(Tyr) + L-tyrosine + ATP = L-tyrosyl-tRNA(Tyr) + AMP + diphosphate + H(+). In terms of biological role, catalyzes the attachment of tyrosine to tRNA(Tyr) in a two-step reaction: tyrosine is first activated by ATP to form Tyr-AMP and then transferred to the acceptor end of tRNA(Tyr). The sequence is that of Tyrosine--tRNA ligase from Desulfitobacterium hafniense (strain Y51).